The primary structure comprises 770 residues: Multifunctional tryptophan biosynthesis protein (770 aa).

Residues 25–225 form the Glutamine amidotransferase type-1 domain; that stretch reads NVILIDNYDS…LKLTAGTWEG (201 aa). Residue 76 to 78 coordinates L-glutamine; that stretch reads GPG. The active-site Nucleophile; for GATase activity is Cys104. L-glutamine-binding positions include Gln108 and 154–155; that span reads SL. Residues His199 and Glu201 each act as for GATase activity in the active site. The interval 228 to 251 is disordered; sequence KHFGEQSSTTKATVPSNPPPKTDK. Polar residues predominate over residues 232–242; that stretch reads EQSSTTKATVP. An indole-3-glycerol phosphate synthase region spans residues 255–519; that stretch reads ILERIYDHRR…DTATFIAELL (265 aa). The interval 535–770 is N-(5'-phosphoribosyl)anthranilate isomerase; sequence LVKICGTRSE…RAFVQAVRGL (236 aa).

The enzyme catalyses N-(5-phospho-beta-D-ribosyl)anthranilate = 1-(2-carboxyphenylamino)-1-deoxy-D-ribulose 5-phosphate. It catalyses the reaction 1-(2-carboxyphenylamino)-1-deoxy-D-ribulose 5-phosphate + H(+) = (1S,2R)-1-C-(indol-3-yl)glycerol 3-phosphate + CO2 + H2O. It carries out the reaction chorismate + L-glutamine = anthranilate + pyruvate + L-glutamate + H(+). Its pathway is amino-acid biosynthesis; L-tryptophan biosynthesis; L-tryptophan from chorismate: step 1/5. It participates in amino-acid biosynthesis; L-tryptophan biosynthesis; L-tryptophan from chorismate: step 3/5. It functions in the pathway amino-acid biosynthesis; L-tryptophan biosynthesis; L-tryptophan from chorismate: step 4/5. Functionally, trifunctional enzyme bearing the Gln amidotransferase (GATase) domain of anthranilate synthase, indole-glycerolphosphate synthase, and phosphoribosylanthranilate isomerase activities. This chain is Multifunctional tryptophan biosynthesis protein (trpC), found in Aspergillus niger.